A 520-amino-acid polypeptide reads, in one-letter code: Bifunctional purine biosynthesis protein PurH (520 aa).

The region spanning 1 to 146 (MAPVALLSVS…KNHADVAVLT (146 aa)) is the MGS-like domain.

Belongs to the PurH family.

The enzyme catalyses (6R)-10-formyltetrahydrofolate + 5-amino-1-(5-phospho-beta-D-ribosyl)imidazole-4-carboxamide = 5-formamido-1-(5-phospho-D-ribosyl)imidazole-4-carboxamide + (6S)-5,6,7,8-tetrahydrofolate. The catalysed reaction is IMP + H2O = 5-formamido-1-(5-phospho-D-ribosyl)imidazole-4-carboxamide. Its pathway is purine metabolism; IMP biosynthesis via de novo pathway; 5-formamido-1-(5-phospho-D-ribosyl)imidazole-4-carboxamide from 5-amino-1-(5-phospho-D-ribosyl)imidazole-4-carboxamide (10-formyl THF route): step 1/1. It functions in the pathway purine metabolism; IMP biosynthesis via de novo pathway; IMP from 5-formamido-1-(5-phospho-D-ribosyl)imidazole-4-carboxamide: step 1/1. The chain is Bifunctional purine biosynthesis protein PurH from Synechococcus sp. (strain CC9902).